We begin with the raw amino-acid sequence, 281 residues long: General control transcription factor GCN4 (281 aa).

Serine 17 carries the post-translational modification Phosphoserine. 2 required for transcriptional activation regions span residues 89–100 (LDDAVVESFFSS) and 106–125 (PMFEYENLEDNSKEWTSLFD). Threonine 165 is modified (phosphothreonine; by PHO85). The Nuclear localization signal motif lies at 167–200 (VLEDAKLTQTRKVKKPNSVVKKSHHVGKDDESRL). The disordered stretch occupies residues 217 to 248 (LSPIVPESSDPAALKRARNTEAARRSRARKLQ). Phosphoserine is present on serine 218. Residues 225 to 281 (SDPAALKRARNTEAARRSRARKLQRMKQLEDKVEELLSKNYHLENEVARLKKLVGER) form the bZIP domain. The short motif at 231 to 249 (KRARNTEAARRSRARKLQR) is the Nuclear localization signal element. A basic motif region spans residues 231 to 251 (KRARNTEAARRSRARKLQRMK). Residues 253 to 274 (LEDKVEELLSKNYHLENEVARL) are leucine-zipper.

Belongs to the bZIP family. GCN4 subfamily. Homodimer. Each subunit binds overlapping and non-identical half-sites that flank the central CG base-pair in the pseudo-palindromic motif 5'-ATGA[CG]TCAT-3'. Interacts with the mediator tail; the interaction with GAL11/MED15 is direct. Interacts with the SAGA histone acetyltransferase complex. Interacts with the SWI/SNF chromatin remodeling complex. Post-translationally, phosphorylated by the cyclin-CDK PCL5-PHO85. Phosphorylation of Thr-165 induces degradation of GCN4 by the E3 ubiquitin ligase complex SCF(Cdc4).

Its subcellular location is the nucleus. Functionally, master transcriptional regulator that mediates the response to amino acid starvation. Binds variations of the DNA sequence 5'-ATGA[CG]TCAT-3' in canonical nucleosome-depleted 5'-positioned promoters, and also within coding sequences and 3' non-coding regions. During nutrient starvation (low or poor amino acid, carbon or purine sources), it activates genes required for amino acid biosynthesis and transport, autophagy, cofactor biosynthesis and transport, mitochondrial transport, and additional downstream transcription factors. Activates transcription by recruiting multiple coactivators, including the mediator complex, the SAGA complex, and the SWI/SNF complex, to enable assembly of the pre-initiation complex at core promoters. The polypeptide is General control transcription factor GCN4 (Saccharomyces cerevisiae (strain ATCC 204508 / S288c) (Baker's yeast)).